The chain runs to 859 residues: Glucans biosynthesis glucosyltransferase H (859 aa).

6 consecutive transmembrane segments (helical) span residues 144 to 166 (YILL…GILP), 200 to 222 (LLLF…MGFL), 523 to 545 (VMSY…LLAV), 573 to 595 (VALF…ILIW), 608 to 630 (VTVS…MLFH), and 684 to 706 (SFLW…SVIS).

The protein belongs to the glycosyltransferase 2 family. OpgH subfamily.

The protein resides in the cell inner membrane. The protein operates within glycan metabolism; osmoregulated periplasmic glucan (OPG) biosynthesis. Functionally, involved in the biosynthesis of osmoregulated periplasmic glucans (OPGs). The polypeptide is Glucans biosynthesis glucosyltransferase H (Pseudomonas syringae pv. tomato (strain ATCC BAA-871 / DC3000)).